A 396-amino-acid chain; its full sequence is Metallophosphoesterase 1 (396 aa).

A helical transmembrane segment spans residues 27–47 (IAVVFAVLLFCEFLIYYLAIF). A divalent metal cation is bound by residues Asp77, Asp119, Asn157, His249, His303, and His305. The chain crosses the membrane as a helical span at residues 356-376 (VVLVIYCGAVGFLVVLTLSHL). Positions 392–396 (KRKTR) match the Di-lysine motif motif.

This sequence belongs to the metallophosphoesterase superfamily. MPPE1 family. In terms of assembly, interacts with GPI-anchor proteins (via the GPI portion). Interacts with TMED10. Mn(2+) serves as cofactor.

Its subcellular location is the endoplasmic reticulum-Golgi intermediate compartment membrane. Metallophosphoesterase that catalyzes the removal of a side-chain ethanolamine-phosphate (EtNP) from the second mannose of the GPI-anchor protein intermediate. Participates in the glycan remodeling steps of GPI-anchor maturation to allow an efficient transport of GPI-anchor proteins from the endoplasmic reticulum to the Golgi. The chain is Metallophosphoesterase 1 from Macaca fascicularis (Crab-eating macaque).